A 162-amino-acid chain; its full sequence is Shikimate kinase (162 aa).

11–16 (GSGKSS) contacts ATP. Ser15 is a Mg(2+) binding site. Substrate contacts are provided by Asp33, Arg57, and Gly80. ATP is bound at residue Arg116. Substrate is bound at residue Arg132.

It belongs to the shikimate kinase family. Monomer. It depends on Mg(2+) as a cofactor.

The protein resides in the cytoplasm. The enzyme catalyses shikimate + ATP = 3-phosphoshikimate + ADP + H(+). Its pathway is metabolic intermediate biosynthesis; chorismate biosynthesis; chorismate from D-erythrose 4-phosphate and phosphoenolpyruvate: step 5/7. Its function is as follows. Catalyzes the specific phosphorylation of the 3-hydroxyl group of shikimic acid using ATP as a cosubstrate. The protein is Shikimate kinase of Helicobacter acinonychis (strain Sheeba).